A 218-amino-acid polypeptide reads, in one-letter code: UPF0502 protein Shewana3_1622 (218 aa).

The protein belongs to the UPF0502 family.

This Shewanella sp. (strain ANA-3) protein is UPF0502 protein Shewana3_1622.